The primary structure comprises 67 residues: DNA-directed RNA polymerase subunit omega (67 aa).

Belongs to the RNA polymerase subunit omega family. As to quaternary structure, the RNAP catalytic core consists of 2 alpha, 1 beta, 1 beta' and 1 omega subunit. When a sigma factor is associated with the core the holoenzyme is formed, which can initiate transcription.

It catalyses the reaction RNA(n) + a ribonucleoside 5'-triphosphate = RNA(n+1) + diphosphate. In terms of biological role, promotes RNA polymerase assembly. Latches the N- and C-terminal regions of the beta' subunit thereby facilitating its interaction with the beta and alpha subunits. This Dictyoglomus turgidum (strain DSM 6724 / Z-1310) protein is DNA-directed RNA polymerase subunit omega.